The chain runs to 657 residues: Pentatricopeptide repeat-containing protein At1g11710, mitochondrial (657 aa).

Residues 1 to 74 constitute a mitochondrion transit peptide; that stretch reads MFGHVFSRRT…REFRSSPKLA (74 aa). PPR repeat units lie at residues 147 to 181, 182 to 216, 217 to 251, 252 to 282, 290 to 324, 325 to 359, 360 to 394, 395 to 429, 430 to 464, 465 to 499, 500 to 530, 531 to 565, 568 to 602, and 603 to 637; these read SPDV…GFCV, SVHA…GYVE, NVNT…GVWP, NVVS…MGMM, NAVT…GVDC, NERT…GLVV, NTVI…NMQI, DRFT…KLVE, DIVC…GLSL, DAIS…NKTS, NLVI…MEIK, DIVT…DGEK, SLVT…GVVP, and DSIT…GVTP.

It belongs to the PPR family. P subfamily.

It localises to the mitochondrion. The sequence is that of Pentatricopeptide repeat-containing protein At1g11710, mitochondrial from Arabidopsis thaliana (Mouse-ear cress).